The chain runs to 249 residues: Hydroxyacylglutathione hydrolase (249 aa).

Positions 54, 56, 58, 59, 113, 138, and 176 each coordinate Zn(2+).

The protein belongs to the metallo-beta-lactamase superfamily. Glyoxalase II family. In terms of assembly, monomer. Requires Zn(2+) as cofactor.

It carries out the reaction an S-(2-hydroxyacyl)glutathione + H2O = a 2-hydroxy carboxylate + glutathione + H(+). It functions in the pathway secondary metabolite metabolism; methylglyoxal degradation; (R)-lactate from methylglyoxal: step 2/2. Its function is as follows. Thiolesterase that catalyzes the hydrolysis of S-D-lactoyl-glutathione to form glutathione and D-lactic acid. This is Hydroxyacylglutathione hydrolase from Synechococcus sp. (strain CC9605).